The sequence spans 343 residues: Alpha-tocopherol transfer protein-like (343 aa).

The segment at M1–P29 is disordered. Over residues L8–E19 the composition is skewed to polar residues. Positions R118–D283 constitute a CRAL-TRIO domain.

Functionally, may act as a protein that binds a hydrophobic ligand. The protein is Alpha-tocopherol transfer protein-like (Ttpal) of Mus musculus (Mouse).